The sequence spans 432 residues: GTPase Obg (432 aa).

The Obg domain maps to 1 to 158 (MFVDQVKIYV…RNIILELKLL (158 aa)). One can recognise an OBG-type G domain in the interval 159–329 (ADVGLVGFPS…LLFAIADLLE (171 aa)). GTP contacts are provided by residues 165-172 (GFPSVGKS), 190-194 (FTTLV), 212-215 (DLPG), 282-285 (NKMD), and 310-312 (SAA). 2 residues coordinate Mg(2+): S172 and T192. The 79-residue stretch at 350 to 428 (KYEKEEPPFT…LLDYEFEFVD (79 aa)) folds into the OCT domain.

This sequence belongs to the TRAFAC class OBG-HflX-like GTPase superfamily. OBG GTPase family. Monomer. Requires Mg(2+) as cofactor.

It localises to the cytoplasm. Its function is as follows. An essential GTPase which binds GTP, GDP and possibly (p)ppGpp with moderate affinity, with high nucleotide exchange rates and a fairly low GTP hydrolysis rate. Plays a role in control of the cell cycle, stress response, ribosome biogenesis and in those bacteria that undergo differentiation, in morphogenesis control. The polypeptide is GTPase Obg (Geobacillus kaustophilus (strain HTA426)).